A 356-amino-acid chain; its full sequence is tRNA N6-adenosine threonylcarbamoyltransferase (356 aa).

Fe cation-binding residues include His-115 and His-119. Residues 138–142 (LVSGG), Asp-171, Gly-184, and Asn-277 contribute to the substrate site. Asp-305 contacts Fe cation.

This sequence belongs to the KAE1 / TsaD family. Fe(2+) is required as a cofactor.

The protein resides in the cytoplasm. It catalyses the reaction L-threonylcarbamoyladenylate + adenosine(37) in tRNA = N(6)-L-threonylcarbamoyladenosine(37) in tRNA + AMP + H(+). In terms of biological role, required for the formation of a threonylcarbamoyl group on adenosine at position 37 (t(6)A37) in tRNAs that read codons beginning with adenine. Is involved in the transfer of the threonylcarbamoyl moiety of threonylcarbamoyl-AMP (TC-AMP) to the N6 group of A37, together with TsaE and TsaB. TsaD likely plays a direct catalytic role in this reaction. The protein is tRNA N6-adenosine threonylcarbamoyltransferase of Polaromonas naphthalenivorans (strain CJ2).